A 610-amino-acid polypeptide reads, in one-letter code: Serine/threonine-protein kinase VRK1 (610 aa).

The region spanning 32-384 (FIVGKQFATG…PRKRTTRKAV (353 aa)) is the Protein kinase domain. Residues 38–46 (FATGGFGRI) and Lys61 each bind ATP. The active-site Proton acceptor is Asp167. Disordered stretches follow at residues 317-476 (IQKT…NKVA), 498-530 (ISVA…VGEG), 544-577 (KKAK…KGRR), and 590-610 (ERLA…SSEV). The segment covering 352–373 (AVKEESDNKDNDEVEVKPEKKA) has biased composition (basic and acidic residues). Positions 388 to 397 (NDSDDNEEQY) are enriched in acidic residues. Positions 447–458 (TTPSSAASTSRS) are enriched in low complexity. Polar residues predominate over residues 465–474 (LTSSTASSNK). Low complexity predominate over residues 502-517 (SDKSPTTSTPSSSSGL). 2 stretches are compositionally biased toward polar residues: residues 550–559 (SGISSATKAS) and 594–610 (SRQT…SSEV).

The protein belongs to the protein kinase superfamily. CK1 Ser/Thr protein kinase family. VRK subfamily. Autophosphorylates in vitro. As to expression, present in germ cells at all stages of progression from the mitotic zone to mature oocytes, but not in maturing spermatids (at the protein level). Expressed in the ventral nerve cord and vulva cells.

It is found in the nucleus. The protein localises to the cytoplasm. It localises to the cajal body. The enzyme catalyses L-seryl-[protein] + ATP = O-phospho-L-seryl-[protein] + ADP + H(+). The catalysed reaction is L-threonyl-[protein] + ATP = O-phospho-L-threonyl-[protein] + ADP + H(+). Functionally, serine/threonine kinase that phosphorylates baf-1, thus regulating the association of baf-1 with chromatin and nuclear membrane proteins during nuclear envelope formation. May act through the egl-17 signaling pathway. Essential in hermaphrodites for formation of the vulva, uterus, and uterine seam cells and for development and maintenance of the somatic gonad and thus the germ line. Acts to prevent cep-1 from triggering an inappropriate cell cycle arrest, thereby promoting germ cell proliferation. Regulates anchor cell polarity and the timing of anchor cell invasion through the basement membranes separating vulval and somatic gonadal cells during the L3 larval stage. The chain is Serine/threonine-protein kinase VRK1 from Caenorhabditis elegans.